Consider the following 979-residue polypeptide: Putative disease resistance protein RGA1 (979 aa).

Residues 143–437 (GSVLTEPQVY…MAHGFLLSKG (295 aa)) enclose the NB-ARC domain. 182–189 (GMGGLGKT) contributes to the ATP binding site. LRR repeat units follow at residues 524–547 (FVSLRVLNLRNSNLNQLPSSIGDL), 549–570 (HLRYLDLSGNFRIRNLPKRLCK), 571–594 (LQNLQTLDLHYCDSLSCLPKQTSK), 595–619 (LGSLRNLLLDGCSLTSTPPRIGLLT), 637–661 (LGELKNLNLYGSISITKLDRVKKDT), 748–773 (LPCLESLELHTGSADVEYVEDNVHPG), 823–841 (VKTLKVIVTDATVLRSISN), 842–866 (LRALTSLDISDNVEATSLPEEMFKS), 868–890 (ANLKYLKISFFRNLKELPTSLAS), 891–915 (LNALKSLKFEFCDALESLPEEGVKG), 917–939 (TSLTELSVSNCMMLKCLPEGLQH), and 940–965 (LTALTTLTITQCPIVFKRCERGIGED).

This sequence belongs to the disease resistance NB-LRR family.

Its function is as follows. Disease resistance protein. Resistance proteins guard the plant against pathogens that contain an appropriate avirulence protein via a direct or indirect interaction with this avirulence protein. That triggers a defense system which restricts the pathogen growth. In Solanum bulbocastanum (Wild potato), this protein is Putative disease resistance protein RGA1 (RGA1).